We begin with the raw amino-acid sequence, 150 residues long: Non-structural protein (150 aa).

An apoptotic activity region spans residues 93-140 (PLFRIRFLLLIMSDSISLTDITISPGTLYSARTLLLRAAVLALTRKPM).

Disrupts the host mitochondrial membrane potential and induces apoptosis probably by inducing host CASP8 and CASP9. The protein is Non-structural protein of Bos taurus (Bovine).